The following is a 351-amino-acid chain: Anthranilate phosphoribosyltransferase (351 aa).

5-phospho-alpha-D-ribose 1-diphosphate is bound by residues G80, 83–84, T88, 90–93, 108–116, and S120; these read GD, NIST, and KHGNRSITS. Residue G80 participates in anthranilate binding. Residue S92 coordinates Mg(2+). N111 is an anthranilate binding site. R166 is an anthranilate binding site. D229 and E230 together coordinate Mg(2+).

It belongs to the anthranilate phosphoribosyltransferase family. Homodimer. Mg(2+) is required as a cofactor.

It catalyses the reaction N-(5-phospho-beta-D-ribosyl)anthranilate + diphosphate = 5-phospho-alpha-D-ribose 1-diphosphate + anthranilate. Its pathway is amino-acid biosynthesis; L-tryptophan biosynthesis; L-tryptophan from chorismate: step 2/5. Functionally, catalyzes the transfer of the phosphoribosyl group of 5-phosphorylribose-1-pyrophosphate (PRPP) to anthranilate to yield N-(5'-phosphoribosyl)-anthranilate (PRA). The sequence is that of Anthranilate phosphoribosyltransferase from Chlorobaculum tepidum (strain ATCC 49652 / DSM 12025 / NBRC 103806 / TLS) (Chlorobium tepidum).